The chain runs to 388 residues: CUE domain-containing protein 1 (388 aa).

Residues 1–10 (MTSLFRRSSS) are compositionally biased toward low complexity. The disordered stretch occupies residues 1 to 45 (MTSLFRRSSSGSGGGGATGARGAGTGAGDGSTAPQELNNSRPARQ). Gly residues predominate over residues 11–29 (GSGGGGATGARGAGTGAGD). One can recognise a CUE domain in the interval 50–93 (EFNQAMDDFKTMFPNMDYDIIECVLRANSGAVDATIDQLLQMNL). 4 disordered regions span residues 152-178 (PTPP…WNPP), 196-225 (DSIQ…ACDQ), 270-302 (SQKS…TVSE), and 369-388 (DFRG…REGQ). Polar residues predominate over residues 290 to 300 (VPGTSETNPTV).

This Mus musculus (Mouse) protein is CUE domain-containing protein 1 (Cuedc1).